Here is a 124-residue protein sequence, read N- to C-terminus: Large ribosomal subunit protein bL12 (124 aa).

This sequence belongs to the bacterial ribosomal protein bL12 family. Homodimer. Part of the ribosomal stalk of the 50S ribosomal subunit. Forms a multimeric L10(L12)X complex, where L10 forms an elongated spine to which 2 to 4 L12 dimers bind in a sequential fashion. Binds GTP-bound translation factors.

Functionally, forms part of the ribosomal stalk which helps the ribosome interact with GTP-bound translation factors. Is thus essential for accurate translation. The protein is Large ribosomal subunit protein bL12 of Idiomarina loihiensis (strain ATCC BAA-735 / DSM 15497 / L2-TR).